We begin with the raw amino-acid sequence, 925 residues long: Probable replication restart protein PriA (925 aa).

Zn(2+)-binding residues include C645, C648, C654, C657, C672, C675, C685, and C688.

The protein belongs to the helicase family. PriA subfamily. Interacts with DnaB (DR_0549). Component of the replication restart primosome. The cofactor is Zn(2+).

Initiates the restart of stalled replication forks, which reloads the replicative helicase on sites other than the origin of replication. Recognizes abandoned replication forks and remodels them to uncover a helicase loading site. Promotes assembly of the primosome at these replication forks. Recognizes and binds DNA at stalled replication forks, also binds single-stranded (ss)DNA. This is Probable replication restart protein PriA from Deinococcus radiodurans (strain ATCC 13939 / DSM 20539 / JCM 16871 / CCUG 27074 / LMG 4051 / NBRC 15346 / NCIMB 9279 / VKM B-1422 / R1).